A 447-amino-acid chain; its full sequence is Argininosuccinate synthase (447 aa).

ATP is bound by residues 20-28 (AFSGGLDTS) and Ala-46. Tyr-102 is a binding site for L-citrulline. The ATP site is built by Gly-132 and Thr-134. Thr-134, Asn-138, and Asp-139 together coordinate L-aspartate. L-citrulline is bound at residue Asn-138. Asp-139 is an ATP binding site. Positions 142 and 195 each coordinate L-citrulline. Asp-197 is an ATP binding site. L-citrulline is bound by residues Thr-204, Glu-206, and Glu-283.

It belongs to the argininosuccinate synthase family. Type 2 subfamily. As to quaternary structure, homotetramer.

The protein localises to the cytoplasm. It catalyses the reaction L-citrulline + L-aspartate + ATP = 2-(N(omega)-L-arginino)succinate + AMP + diphosphate + H(+). It functions in the pathway amino-acid biosynthesis; L-arginine biosynthesis; L-arginine from L-ornithine and carbamoyl phosphate: step 2/3. This Neisseria meningitidis serogroup C / serotype 2a (strain ATCC 700532 / DSM 15464 / FAM18) protein is Argininosuccinate synthase.